The sequence spans 410 residues: MGLKHFLEKIEPHFLPGGKHEKWYALYEAAATIFYTSGAVTRKAAHVRDALDSKRMMILVWLALFPAMFYGMYNVGAQAFGALTPDLLQQNIANDWHYAFANALGINMSSEAGVSDKMLFGAIYFLPIYATVFVVGGFWEVLFATVRKHEINEGFFVTSILFALIVPPTLPLWQAALGISFGVVVAKEVFGGTGKNFMNPALAGRAFLFFAYPANLSGDAVWTAVDGYSGATALAQWAAHGADGLKNAVTGQTITWMDAFIGKLPGSIGEVSTLALLIGGAFIVFARIASWRIIAGVMIGMIAMSSLFNFIGSDTNAMFAMPWYWHLVVGGFAIGMLFMATDPVSASFTNVGKWWYGALIGVMCVLIRVVNPAYPEGMMLAILFANLFAPIFDYFVAQANIKRRKARSNG.

A run of 3 helical transmembrane segments spans residues 56-76 (MMILVWLALFPAMFYGMYNVG), 119-139 (LFGAIYFLPIYATVFVVGGFW), and 159-179 (SILFALIVPPTLPLWQAALGI). Threonine 232 carries the FMN phosphoryl threonine modification. A run of 5 helical transmembrane segments spans residues 266-286 (GSIGEVSTLALLIGGAFIVFA), 293-313 (IIAGVMIGMIAMSSLFNFIGS), 318-338 (MFAMPWYWHLVVGGFAIGMLF), 347-367 (SFTNVGKWWYGALIGVMCVLI), and 377-397 (GMMLAILFANLFAPIFDYFVA).

The protein belongs to the NqrB/RnfD family. In terms of assembly, composed of six subunits; NqrA, NqrB, NqrC, NqrD, NqrE and NqrF. The cofactor is FMN.

It is found in the cell inner membrane. The catalysed reaction is a ubiquinone + n Na(+)(in) + NADH + H(+) = a ubiquinol + n Na(+)(out) + NAD(+). Its function is as follows. NQR complex catalyzes the reduction of ubiquinone-1 to ubiquinol by two successive reactions, coupled with the transport of Na(+) ions from the cytoplasm to the periplasm. NqrA to NqrE are probably involved in the second step, the conversion of ubisemiquinone to ubiquinol. This Neisseria meningitidis serogroup B (strain ATCC BAA-335 / MC58) protein is Na(+)-translocating NADH-quinone reductase subunit B.